The sequence spans 709 residues: Phosphoribosylformylglycinamidine synthase subunit PurL (709 aa).

The active site involves His36. ATP-binding residues include Tyr39 and Lys80. Glu82 lines the Mg(2+) pocket. Substrate-binding positions include 83–86 (SHNH) and Arg105. The active-site Proton acceptor is the His84. Position 106 (Asp106) interacts with Mg(2+). Gln226 serves as a coordination point for substrate. Asp252 contacts Mg(2+). Position 294-296 (294-296 (ETQ)) interacts with substrate. ATP is bound by residues Asp470 and Gly507. Ser510 is a binding site for substrate.

The protein belongs to the FGAMS family. Monomer. Part of the FGAM synthase complex composed of 1 PurL, 1 PurQ and 2 PurS subunits.

It is found in the cytoplasm. The enzyme catalyses N(2)-formyl-N(1)-(5-phospho-beta-D-ribosyl)glycinamide + L-glutamine + ATP + H2O = 2-formamido-N(1)-(5-O-phospho-beta-D-ribosyl)acetamidine + L-glutamate + ADP + phosphate + H(+). It functions in the pathway purine metabolism; IMP biosynthesis via de novo pathway; 5-amino-1-(5-phospho-D-ribosyl)imidazole from N(2)-formyl-N(1)-(5-phospho-D-ribosyl)glycinamide: step 1/2. In terms of biological role, part of the phosphoribosylformylglycinamidine synthase complex involved in the purines biosynthetic pathway. Catalyzes the ATP-dependent conversion of formylglycinamide ribonucleotide (FGAR) and glutamine to yield formylglycinamidine ribonucleotide (FGAM) and glutamate. The FGAM synthase complex is composed of three subunits. PurQ produces an ammonia molecule by converting glutamine to glutamate. PurL transfers the ammonia molecule to FGAR to form FGAM in an ATP-dependent manner. PurS interacts with PurQ and PurL and is thought to assist in the transfer of the ammonia molecule from PurQ to PurL. This Saccharolobus islandicus (strain M.16.27) (Sulfolobus islandicus) protein is Phosphoribosylformylglycinamidine synthase subunit PurL.